Reading from the N-terminus, the 880-residue chain is Alanine--tRNA ligase (880 aa).

His569, His573, Cys671, and His675 together coordinate Zn(2+).

This sequence belongs to the class-II aminoacyl-tRNA synthetase family. As to quaternary structure, homotetramer. Zn(2+) is required as a cofactor.

It localises to the cytoplasm. It carries out the reaction tRNA(Ala) + L-alanine + ATP = L-alanyl-tRNA(Ala) + AMP + diphosphate. Its function is as follows. Catalyzes the attachment of alanine to tRNA(Ala) in a two-step reaction: alanine is first activated by ATP to form Ala-AMP and then transferred to the acceptor end of tRNA(Ala). Also edits incorrectly charged Ser-tRNA(Ala) and Gly-tRNA(Ala) via its editing domain. This Buchnera aphidicola subsp. Baizongia pistaciae (strain Bp) protein is Alanine--tRNA ligase.